We begin with the raw amino-acid sequence, 984 residues long: Putative formate dehydrogenase SH0748 (984 aa).

In terms of domain architecture, 2Fe-2S ferredoxin-type spans 3–79; sequence EHLIVTLDGT…PMTVNTQNND (77 aa). The [2Fe-2S] cluster site is built by cysteine 37, cysteine 48, cysteine 51, and cysteine 63. Residues 79–119 enclose the 4Fe-4S His(Cys)3-ligated-type domain; sequence DVKASQKEALDRILEKHMLYCTVCDYNNGDCEIHNAMDAWG. Residues histidine 95, cysteine 99, cysteine 102, cysteine 109, cysteine 147, cysteine 150, cysteine 153, cysteine 157, cysteine 190, cysteine 193, cysteine 196, cysteine 200, cysteine 264, cysteine 267, cysteine 271, and cysteine 299 each contribute to the [4Fe-4S] cluster site. 4Fe-4S ferredoxin-type domains are found at residues 138–165 and 181–211; these read PFYR…VNET and NDVP…VNME. The tract at residues 252–984 is formate dehydrogenase; sequence MRKERIKKTK…YVFPGNVVDK (733 aa). In terms of domain architecture, 4Fe-4S Mo/W bis-MGD-type spans 257–313; sequence IKKTKTVCTYCGVGCSFDVWTKDREVLKVQPSHDSPANKIATCVKGKFSWGHINSDQ.

The protein in the C-terminal section; belongs to the prokaryotic molybdopterin-containing oxidoreductase family. The cofactor is [2Fe-2S] cluster. [4Fe-4S] cluster serves as cofactor. Mo-bis(molybdopterin guanine dinucleotide) is required as a cofactor.

The enzyme catalyses formate + NAD(+) = CO2 + NADH. The protein is Putative formate dehydrogenase SH0748 of Staphylococcus haemolyticus (strain JCSC1435).